Here is a 325-residue protein sequence, read N- to C-terminus: 5-dehydro-2-deoxygluconokinase (325 aa).

The protein belongs to the carbohydrate kinase PfkB family.

The enzyme catalyses 5-dehydro-2-deoxy-D-gluconate + ATP = 6-phospho-5-dehydro-2-deoxy-D-gluconate + ADP + H(+). The protein operates within polyol metabolism; myo-inositol degradation into acetyl-CoA; acetyl-CoA from myo-inositol: step 5/7. Its function is as follows. Catalyzes the phosphorylation of 5-dehydro-2-deoxy-D-gluconate (2-deoxy-5-keto-D-gluconate or DKG) to 6-phospho-5-dehydro-2-deoxy-D-gluconate (DKGP). This Listeria monocytogenes serovar 1/2a (strain ATCC BAA-679 / EGD-e) protein is 5-dehydro-2-deoxygluconokinase.